Consider the following 356-residue polypeptide: Thrombomodulin (356 aa).

Residues 1-296 (RGARGETEGR…SPAPAGPLHS (296 aa)) lie on the Extracellular side of the membrane. EGF-like domains follow at residues 17–57 (GAWA…RSCG) and 60–98 (AEHPCHQLCEHFCHLHGLGNYTCICEAGYQLAADQHRCE). Disulfide bonds link C21/C32, C28/C41, C43/C56, C64/C72, C68/C82, C84/C97, C103/C114, C110/C123, C125/C136, C143/C152, C148/C162, C164/C178, C182/C191, C187/C199, C201/C213, C219/C228, C224/C237, and C239/C253. Positions 99–137 (DVDDCAQLPSPCPQRCVNTEGGFQCHCDTGYELVDGECV) constitute an EGF-like 3; calcium-binding domain. EGF-like domains are found at residues 139-179 (PVDP…HKCQ) and 178-214 (CQMFCNQTSCPADCDPHYPTICRCPEGYIIDEGSTCT). One can recognise an EGF-like 6; calcium-binding domain in the interval 215 to 254 (DINECDTNICPGQCHNLPGTYECICGPDSALSGQIGIDCD). Residues 255–290 (PTQVNEERGTPEDYGGSGEPPVSPTPGATARPSPAP) form a disordered region. O-linked (Xyl...) (chondroitin sulfate) serine glycosylation is present at S271. A helical membrane pass occupies residues 297-320 (GVLVGISIASLSLVVALLALLCHL). Residues 321 to 356 (RKKQGASRGELEYKCGVPAKELMLQQVKTERTPQKL) are Cytoplasmic-facing.

As to quaternary structure, interacts with ITGAL, ITGAM and ITGB2. Interacts with thrombin/F2; this interaction switches the specificity of thrombin from a procoagulant to an anticoagulant and antifibrinolytic protease. Interacts with ANGP1 and ANGP2; these interactions significantly inhibit the generation of activated PC and TAFIa/CPB2 by the thrombin/thrombomodulin complex. Interacts with PF4; this interaction enhances generation of activated protein C. Interacts with HMGB1; this interaction inhibits HMGB1 inflammatory activity. As to expression, endothelial cells are unique in synthesizing thrombomodulin.

Its subcellular location is the membrane. Functionally, endothelial cell receptor that plays a critical role in regulating several physiological processes including hemostasis, coagulation, fibrinolysis, inflammation, and angiogenesis. Acts as a cofactor for thrombin activation of protein C/PROC on the surface of vascular endothelial cells leading to initiation of the activated protein C anticoagulant pathway. Also accelerates the activation of the plasma carboxypeptidase B2/CPB2, which catalyzes removal of C-terminal basic amino acids from its substrates including kinins or anaphylatoxins leading to fibrinolysis inhibition. Plays critical protective roles in changing the cleavage specificity of protease-activated receptor 1/PAR1, inhibiting endothelial cell permeability and inflammation. Suppresses inflammation distinctly from its anticoagulant cofactor activity by sequestering HMGB1 thereby preventing it from engaging cellular receptors such as RAGE and contributing to the inflammatory response. This Bos taurus (Bovine) protein is Thrombomodulin (THBD).